Here is a 267-residue protein sequence, read N- to C-terminus: Hydroxyethylthiazole kinase (267 aa).

Met-49 contacts substrate. Positions 124 and 170 each coordinate ATP. A substrate-binding site is contributed by Gly-197.

Belongs to the Thz kinase family. Mg(2+) is required as a cofactor.

The catalysed reaction is 5-(2-hydroxyethyl)-4-methylthiazole + ATP = 4-methyl-5-(2-phosphooxyethyl)-thiazole + ADP + H(+). The protein operates within cofactor biosynthesis; thiamine diphosphate biosynthesis; 4-methyl-5-(2-phosphoethyl)-thiazole from 5-(2-hydroxyethyl)-4-methylthiazole: step 1/1. Functionally, catalyzes the phosphorylation of the hydroxyl group of 4-methyl-5-beta-hydroxyethylthiazole (THZ). The polypeptide is Hydroxyethylthiazole kinase (Tolumonas auensis (strain DSM 9187 / NBRC 110442 / TA 4)).